We begin with the raw amino-acid sequence, 418 residues long: NADH-quinone oxidoreductase subunit D (418 aa).

It belongs to the complex I 49 kDa subunit family. As to quaternary structure, NDH-1 is composed of 14 different subunits. Subunits NuoB, C, D, E, F, and G constitute the peripheral sector of the complex.

The protein resides in the cell inner membrane. It catalyses the reaction a quinone + NADH + 5 H(+)(in) = a quinol + NAD(+) + 4 H(+)(out). Its function is as follows. NDH-1 shuttles electrons from NADH, via FMN and iron-sulfur (Fe-S) centers, to quinones in the respiratory chain. The immediate electron acceptor for the enzyme in this species is believed to be ubiquinone. Couples the redox reaction to proton translocation (for every two electrons transferred, four hydrogen ions are translocated across the cytoplasmic membrane), and thus conserves the redox energy in a proton gradient. In Neisseria meningitidis serogroup C (strain 053442), this protein is NADH-quinone oxidoreductase subunit D.